We begin with the raw amino-acid sequence, 418 residues long: Elongation factor Tu, chloroplastic (418 aa).

The region spanning 10–214 (KPHVNIGTIG…NVDSYIPTPQ (205 aa)) is the tr-type G domain. Positions 19 to 26 (GHVDHGKT) are G1. Residue 19–26 (GHVDHGKT) coordinates GTP. T26 contributes to the Mg(2+) binding site. Positions 60–64 (GITIN) are G2. The G3 stretch occupies residues 81-84 (DCPG). GTP-binding positions include 81–85 (DCPGH) and 136–139 (NKED). The G4 stretch occupies residues 136-139 (NKED). The tract at residues 174-176 (SAL) is G5.

This sequence belongs to the TRAFAC class translation factor GTPase superfamily. Classic translation factor GTPase family. EF-Tu/EF-1A subfamily.

It localises to the plastid. Its subcellular location is the chloroplast. It carries out the reaction GTP + H2O = GDP + phosphate + H(+). GTP hydrolase that promotes the GTP-dependent binding of aminoacyl-tRNA to the A-site of ribosomes during protein biosynthesis. The polypeptide is Elongation factor Tu, chloroplastic (tufA) (Chlamydomonas reinhardtii (Chlamydomonas smithii)).